The following is a 298-amino-acid chain: Calcium-binding protein 1 (298 aa).

Over residues 1-10 (MSSHIAKSES) the composition is skewed to basic and acidic residues. The interval 1–131 (MSSHIAKSES…APAGTPEADP (131 aa)) is disordered. Serine 2 carries N-myristoyl glycine lipidation. Histidine 4 is lipidated: S-palmitoyl cysteine. Residues 11–25 (KTSLLKAAAASGGSR) show a composition bias toward low complexity. 4 consecutive EF-hand domains span residues 153–188 (EEIE…MGYM), 207–224 (GHVD…KLLA), 230–265 (IGVK…LLGH), and 267–298 (VGHR…MMSR). Ca(2+)-binding residues include aspartate 166, aspartate 168, aspartate 170, tyrosine 172, and aspartate 177. Ca(2+)-binding residues include aspartate 243, asparagine 245, aspartate 247, and glutamate 249. Serine 251 carries the phosphoserine modification. Ca(2+)-binding residues include glutamate 254, aspartate 280, asparagine 282, aspartate 284, arginine 286, and glutamate 291.

As to quaternary structure, interacts with ITPR1, ITPR2 and ITPR3. The strength of this interaction inversely correlates with calcium concentration. Interacts with CACNA1A (via C-terminal CDB motif) in the pre- and postsynaptic membranes. Interacts with CACNA1C. Interacts with CACNA1D. Interacts (via EF-hands 1 and 2) at microtubules with MAP1LC3B. Interacts (via EF-hands 1 and 2) with NSMF (via the central NLS-containing motif region), the interaction occurs in a calcium dependent manner after synaptic NMDA receptor stimulation and prevents nuclear import of NSMF. Interacts with MYO1C and TRPC5. Interacts with SPACA9. Post-translationally, phosphorylated. The phosphorylation regulates the activity. Somatodendritic compartment of neurons. Restricted expression in retina to a subpopulation of amacrine, bipolar, and ganglion cells. According to PubMed:11906216, expression is heterogeneous within brain regions and their major cell types and does not match with those of marker proteins for characterized neuronal subpopulations. Isoform 2: Minor isoform expressed in the brain, in the granule cell layer of the cerebellum, at low level. Not developmentally regulated. Isoform 3: Minor isoform expressed in the brain, in the granule cell layer. of the cerebellum, at low level. Not developmentally regulated.

It localises to the cytoplasm. It is found in the cytoskeleton. Functionally, modulates calcium-dependent activity of inositol 1,4,5-triphosphate receptors (ITPRs). Inhibits agonist-induced intracellular calcium signaling. Enhances inactivation and does not support calcium-dependent facilitation of voltage-dependent P/Q-type calcium channels. Causes calcium-dependent facilitation and inhibits inactivation of L-type calcium channels by binding to the same sites as calmodulin in the C-terminal domain of CACNA1C, but has an opposite effect on channel function. Suppresses the calcium-dependent inactivation of CACNA1D. Inhibits TRPC5 channels. Prevents NMDA receptor-induced cellular degeneration. Required for the normal transfer of light signals through the retina. This Rattus norvegicus (Rat) protein is Calcium-binding protein 1 (Cabp1).